The sequence spans 498 residues: MSTSSKLSTNIKDLSLFDLEEFPARSYIGGKWVTAASGKTFDVENPGLNETLAPVTDMSVEETRKAIKVAHEAFLSYRNSDIKERYAILRRWYDLIMENADDLATMMTLENGKALGDAKGEVVYAAKFIDWFAGEALRISGDSSMSSNPQNRIITIKQPVGVVGIITPWNFPAAMITRKVGAALAAGCTVVIRPAAETPFTALALAKLAERAGVPAGVLNMVTANSPSEHGIELTTNPLIRKVSFTGSTNVGKILAKQSSSTLKKLSLELGGNAPFIVFEDADLEKAADALMACKFRGSGQTCVCANRIYVHSSVYDAFVDLVTERVSKFKLGYGLDAGVTHGPLISEKAISKVKQHVEDAVQKGGVVVTGGKVASNLGPMYFEPTVIINAKQGMLISEEETFGPVGALFKFDTEDEVVAWANDSPVGLAGYLFSKDISRVFRVGEALQVGMVGCNTGLVSDVLSPFGGVKESGFGREGSKYGISEYLDIKSLTISTL.

247 to 252 (GSTNVG) is an NAD(+) binding site. Active-site residues include Glu269 and Cys303.

Belongs to the aldehyde dehydrogenase family. In terms of assembly, homotetramer.

The protein resides in the cytoplasm. It catalyses the reaction succinate semialdehyde + NAD(+) + H2O = succinate + NADH + 2 H(+). The catalysed reaction is succinate semialdehyde + NADP(+) + H2O = succinate + NADPH + 2 H(+). It participates in amino-acid degradation; 4-aminobutanoate degradation. Functionally, catalyzes the oxidation of succinate semialdehyde to succinate. Can utilize both NAD(+) or NADP(+) as a coenzyme. Functions in a gamma-aminobutyrate (GABA) degradation pathway that allows growth utilizing GABA as a nitrogen source. Functions in the GABA shunt, which allows to bypass 2 reactions in the TCA cycle by removing alpha-ketoglutarate from the cycle and feeding succinate and NADH back into the cycle. This is Succinate-semialdehyde dehydrogenase [NADP(+)] 1 (ssd1) from Schizosaccharomyces pombe (strain 972 / ATCC 24843) (Fission yeast).